A 1141-amino-acid polypeptide reads, in one-letter code: Probable ubiquitin carboxyl-terminal hydrolase 2 (1141 aa).

Thr112 bears the Phosphothreonine mark. Ser113 bears the Phosphoserine mark. Thr115 is subject to Phosphothreonine. Residues 614–1124 form the USP domain; sequence IGLENTGNLC…NPYMLTYIRK (511 aa). Cys623 serves as the catalytic Nucleophile. Thr721 carries the post-translational modification Phosphothreonine. Ser722 bears the Phosphoserine mark. The tract at residues 748-770 is disordered; that stretch reads EEQAQGLEQEQGQDEAKSPAEQS. His1076 acts as the Proton acceptor in catalysis.

It belongs to the peptidase C19 family.

It catalyses the reaction Thiol-dependent hydrolysis of ester, thioester, amide, peptide and isopeptide bonds formed by the C-terminal Gly of ubiquitin (a 76-residue protein attached to proteins as an intracellular targeting signal).. The sequence is that of Probable ubiquitin carboxyl-terminal hydrolase 2 (ubp2) from Schizosaccharomyces pombe (strain 972 / ATCC 24843) (Fission yeast).